Here is a 207-residue protein sequence, read N- to C-terminus: ATP phosphoribosyltransferase (207 aa).

Belongs to the ATP phosphoribosyltransferase family. Short subfamily. In terms of assembly, heteromultimer composed of HisG and HisZ subunits.

The protein resides in the cytoplasm. The enzyme catalyses 1-(5-phospho-beta-D-ribosyl)-ATP + diphosphate = 5-phospho-alpha-D-ribose 1-diphosphate + ATP. The protein operates within amino-acid biosynthesis; L-histidine biosynthesis; L-histidine from 5-phospho-alpha-D-ribose 1-diphosphate: step 1/9. In terms of biological role, catalyzes the condensation of ATP and 5-phosphoribose 1-diphosphate to form N'-(5'-phosphoribosyl)-ATP (PR-ATP). Has a crucial role in the pathway because the rate of histidine biosynthesis seems to be controlled primarily by regulation of HisG enzymatic activity. The protein is ATP phosphoribosyltransferase of Dictyoglomus thermophilum (strain ATCC 35947 / DSM 3960 / H-6-12).